A 921-amino-acid chain; its full sequence is TRPM8 channel-associated factor 1 (921 aa).

The 300-residue stretch at 542–841 (YCWMSTGLYI…TYLQLQEAFG (300 aa)) folds into the Peptidase M60 domain.

It belongs to the TCAF family. In terms of assembly, interacts with TRPM8 (via N-terminus and C-terminus domains); the interaction inhibits TRPM8 channel activity. Interacts with TRPV6.

Its subcellular location is the cell membrane. In terms of biological role, positively regulates the plasma membrane cation channel TRPM8 activity. Involved in the recruitment of TRPM8 to the cell surface. Promotes prostate cancer cell migration inhibition in a TRPM8-dependent manner. In Bos taurus (Bovine), this protein is TRPM8 channel-associated factor 1.